The chain runs to 92 residues: DNA-directed RNA polymerase subunit Rpo11 (92 aa).

It belongs to the archaeal Rpo11/eukaryotic RPB11/RPC19 RNA polymerase subunit family. Part of the RNA polymerase complex.

It localises to the cytoplasm. It carries out the reaction RNA(n) + a ribonucleoside 5'-triphosphate = RNA(n+1) + diphosphate. Its function is as follows. DNA-dependent RNA polymerase (RNAP) catalyzes the transcription of DNA into RNA using the four ribonucleoside triphosphates as substrates. This chain is DNA-directed RNA polymerase subunit Rpo11, found in Methanosarcina acetivorans (strain ATCC 35395 / DSM 2834 / JCM 12185 / C2A).